A 224-amino-acid chain; its full sequence is Urease accessory protein UreF (224 aa).

Belongs to the UreF family. In terms of assembly, ureD, UreF and UreG form a complex that acts as a GTP-hydrolysis-dependent molecular chaperone, activating the urease apoprotein by helping to assemble the nickel containing metallocenter of UreC. The UreE protein probably delivers the nickel.

It localises to the cytoplasm. Its function is as follows. Required for maturation of urease via the functional incorporation of the urease nickel metallocenter. The sequence is that of Urease accessory protein UreF from Pseudomonas fluorescens (strain SBW25).